The chain runs to 347 residues: Melanoma-associated antigen B10 (347 aa).

Residues 1–18 show a composition bias toward basic residues; the sequence is MPRGQKSKLRAREKRRQA. Disordered stretches follow at residues 1-20 and 56-92; these read MPRGQKSKLRAREKRRQARG and GASNNPHGLREAQSTSTSATAASHTRHPEGVNDQMEE. Low complexity predominate over residues 67 to 78; sequence AQSTSTSATAAS. A compositionally biased stretch (basic and acidic residues) spans 81–92; that stretch reads RHPEGVNDQMEE. The 200-residue stretch at 111 to 310 folds into the MAGE domain; the sequence is VDEKVIILVH…SEFSNWYTEA (200 aa). Residues 328–347 are disordered; sequence VSATAGARSKVKSSKSSQLQ.

The sequence is that of Melanoma-associated antigen B10 (MAGEB10) from Homo sapiens (Human).